The primary structure comprises 482 residues: FAD-dependent monooxygenase esdpE (482 aa).

Positions 1 to 21 are cleaved as a signal peptide; sequence MGAERLKVIIVGGSIAGLTLA. Residues glutamate 35 and arginine 108 each coordinate FAD. A glycan (N-linked (GlcNAc...) asparagine) is linked at asparagine 243. Positions 308 and 321 each coordinate FAD. A helical transmembrane segment spans residues 440–460; it reads LFSGSLLLIMSVALLFGVICW.

Belongs to the paxM FAD-dependent monooxygenase family. FAD is required as a cofactor.

Its subcellular location is the membrane. It participates in secondary metabolite biosynthesis; terpenoid biosynthesis. Functionally, FAD-dependent monooxygenase; part of the cluster that mediates the biosynthesis of shearones, diterpenoid pyrones (DPs) which are structurally diverse meroterpenoids consisting of a diterpene linked by a pyrone, and which may exhibit a range of bioactivities. Within the pathway, esdpE takes part to the biosynthesis of the molecular scaffold by catalyzing the formation of an (S)-epoxide ring at the terminal olefin of the geranylgeranyl group. The molecular scaffold is commonly biosynthesized by a series of enzymes including the non-reducing polyketide synthase (NR-PKS) esdpA that generates an alpha-pyrone; the prenyltransferase esdpC that attaches a geranylgeranyl pyrophosphate (GGPP) produced by the GGPP synthase (GGPPS) esdpD onto the pyrone unit; the FAD-dependent monooxygenase esdpE that converts an olefin on the diterpene unit into an epoxide; and the terpene cyclase esdpB that catalyzes the cyclization reactions to give the molecular backbone shearone A. In the modification steps, esdpF oxidizes the hydroxy group to a ketone at C-3 and esdpG then attaches hydroxy groups at both C-11 and C-12. After that, esdpI hydroxylates at C-20 and esdpH hydroxylates at C-6'. The ether bridge is generated by nucleophilic attack of the hydroxy group at C-20 to the carbonyl carbon at C-3. EsdpH can also functions prior to esdpI. The different combinations of these modification enzymes lead to the production of diverse shearone derivatives, shearone I being the end product of the pathway. The alpha-ketoglutarate-dependent dioxygenase esdpJ seems not to be involved in this pathway. This chain is FAD-dependent monooxygenase esdpE, found in Penicillium shearii (Eupenicillium shearii).